The sequence spans 206 residues: Large ribosomal subunit protein uL4 (206 aa).

The tract at residues 43 to 78 (ARSGNRKQKDREEVKHTTKKPWRQKGTGRARAGMSS) is disordered. Over residues 49 to 58 (KQKDREEVKH) the composition is skewed to basic and acidic residues. Residues 59–70 (TTKKPWRQKGTG) are compositionally biased toward basic residues.

The protein belongs to the universal ribosomal protein uL4 family. Part of the 50S ribosomal subunit.

In terms of biological role, one of the primary rRNA binding proteins, this protein initially binds near the 5'-end of the 23S rRNA. It is important during the early stages of 50S assembly. It makes multiple contacts with different domains of the 23S rRNA in the assembled 50S subunit and ribosome. Functionally, forms part of the polypeptide exit tunnel. The chain is Large ribosomal subunit protein uL4 from Ralstonia nicotianae (strain ATCC BAA-1114 / GMI1000) (Ralstonia solanacearum).